A 185-amino-acid polypeptide reads, in one-letter code: Ribosome-recycling factor (185 aa).

It belongs to the RRF family.

Its subcellular location is the cytoplasm. In terms of biological role, responsible for the release of ribosomes from messenger RNA at the termination of protein biosynthesis. May increase the efficiency of translation by recycling ribosomes from one round of translation to another. This is Ribosome-recycling factor from Corynebacterium diphtheriae (strain ATCC 700971 / NCTC 13129 / Biotype gravis).